A 109-amino-acid polypeptide reads, in one-letter code: Large ribosomal subunit protein uL22 (109 aa).

Belongs to the universal ribosomal protein uL22 family. In terms of assembly, part of the 50S ribosomal subunit.

In terms of biological role, this protein binds specifically to 23S rRNA; its binding is stimulated by other ribosomal proteins, e.g. L4, L17, and L20. It is important during the early stages of 50S assembly. It makes multiple contacts with different domains of the 23S rRNA in the assembled 50S subunit and ribosome. Functionally, the globular domain of the protein is located near the polypeptide exit tunnel on the outside of the subunit, while an extended beta-hairpin is found that lines the wall of the exit tunnel in the center of the 70S ribosome. This chain is Large ribosomal subunit protein uL22, found in Polaromonas sp. (strain JS666 / ATCC BAA-500).